The chain runs to 98 residues: NADH-ubiquinone oxidoreductase chain 4L (98 aa).

The next 3 helical transmembrane spans lie at 1 to 21 (MSLV…GLLM), 29 to 49 (SLLC…LTIL), and 61 to 81 (IILL…LVMV).

Belongs to the complex I subunit 4L family. In terms of assembly, core subunit of respiratory chain NADH dehydrogenase (Complex I) which is composed of 45 different subunits.

The protein localises to the mitochondrion inner membrane. It carries out the reaction a ubiquinone + NADH + 5 H(+)(in) = a ubiquinol + NAD(+) + 4 H(+)(out). In terms of biological role, core subunit of the mitochondrial membrane respiratory chain NADH dehydrogenase (Complex I) which catalyzes electron transfer from NADH through the respiratory chain, using ubiquinone as an electron acceptor. Part of the enzyme membrane arm which is embedded in the lipid bilayer and involved in proton translocation. The polypeptide is NADH-ubiquinone oxidoreductase chain 4L (MT-ND4L) (Muntiacus feae (Fea's muntjac)).